The sequence spans 173 residues: Protein C2 (173 aa).

The segment at Cys-69–His-85 is a zinc-finger region.

The protein belongs to the geminiviridae transcriptional activator protein family. In terms of assembly, monomer. Interacting with and inactivating host adenosine kinase 2 (ADK2) in the cytoplasm. Interacts with and inhibits host SNF1 kinase.

Its subcellular location is the host cytoplasm. Its function is as follows. Acts as a suppressor of RNA-mediated gene silencing, also known as post-transcriptional gene silencing (PTGS), a mechanism of plant viral defense that limits the accumulation of viral RNAs. Suppresses the host RNA silencing by inhibiting adenosine kinase 2 (ADK2), a kinase involved in a general methylation pathway. Also suppresses the host basal defense by interacting with and inhibiting SNF1 kinase, a key regulator of cell metabolism implicated in innate antiviral defense. Determines pathogenicity. This Beet curly top virus (strain California/Logan) (BCTV) protein is Protein C2.